The following is a 586-amino-acid chain: Glutathione S-transferase C-terminal domain-containing protein homolog (586 aa).

A GST C-terminal domain is found at 121 to 276; it reads LGFKESCLLA…GTCAKILGDL (156 aa).

It belongs to the GSTCD family.

The protein is Glutathione S-transferase C-terminal domain-containing protein homolog of Drosophila pseudoobscura pseudoobscura (Fruit fly).